We begin with the raw amino-acid sequence, 271 residues long: Ferric enterobactin transport ATP-binding protein FepC (271 aa).

Positions 8-244 (LRGEQLTLGY…ELIERIYGLR (237 aa)) constitute an ABC transporter domain. 40–47 (GPNGCGKS) is an ATP binding site.

Belongs to the ABC transporter superfamily. In terms of assembly, the complex is composed of two ATP-binding proteins (FepC), two transmembrane proteins (FepD and FepG) and a solute-binding protein (FepB).

It is found in the cell inner membrane. It catalyses the reaction Fe(III)-enterobactin(out) + ATP + H2O = Fe(III)-enterobactin(in) + ADP + phosphate + H(+). In terms of biological role, part of the ABC transporter complex FepBDGC involved in ferric enterobactin uptake. Responsible for energy coupling to the transport system. The protein is Ferric enterobactin transport ATP-binding protein FepC (fepC) of Escherichia coli (strain K12).